The following is a 941-amino-acid chain: Isoleucine--tRNA ligase (941 aa).

Positions 58–68 (PYANGDIHIGH) match the 'HIGH' region motif. Glu-563 provides a ligand contact to L-isoleucyl-5'-AMP. The short motif at 604-608 (KMSKS) is the 'KMSKS' region element. Lys-607 provides a ligand contact to ATP. The Zn(2+) site is built by Cys-904, Cys-907, Cys-924, and Cys-927.

This sequence belongs to the class-I aminoacyl-tRNA synthetase family. IleS type 1 subfamily. Monomer. It depends on Zn(2+) as a cofactor.

It is found in the cytoplasm. The enzyme catalyses tRNA(Ile) + L-isoleucine + ATP = L-isoleucyl-tRNA(Ile) + AMP + diphosphate. Its function is as follows. Catalyzes the attachment of isoleucine to tRNA(Ile). As IleRS can inadvertently accommodate and process structurally similar amino acids such as valine, to avoid such errors it has two additional distinct tRNA(Ile)-dependent editing activities. One activity is designated as 'pretransfer' editing and involves the hydrolysis of activated Val-AMP. The other activity is designated 'posttransfer' editing and involves deacylation of mischarged Val-tRNA(Ile). This Halorhodospira halophila (strain DSM 244 / SL1) (Ectothiorhodospira halophila (strain DSM 244 / SL1)) protein is Isoleucine--tRNA ligase.